A 351-amino-acid polypeptide reads, in one-letter code: Anthranilate phosphoribosyltransferase (351 aa).

5-phospho-alpha-D-ribose 1-diphosphate-binding positions include G92, 95-96 (GD), T100, 102-105 (NIST), 120-128 (KHGNRAASS), and S132. G92 contributes to the anthranilate binding site. S104 lines the Mg(2+) pocket. N123 is a binding site for anthranilate. R178 serves as a coordination point for anthranilate. Mg(2+) contacts are provided by D236 and E237.

The protein belongs to the anthranilate phosphoribosyltransferase family. As to quaternary structure, homodimer. Mg(2+) serves as cofactor.

It carries out the reaction N-(5-phospho-beta-D-ribosyl)anthranilate + diphosphate = 5-phospho-alpha-D-ribose 1-diphosphate + anthranilate. It participates in amino-acid biosynthesis; L-tryptophan biosynthesis; L-tryptophan from chorismate: step 2/5. Its function is as follows. Catalyzes the transfer of the phosphoribosyl group of 5-phosphorylribose-1-pyrophosphate (PRPP) to anthranilate to yield N-(5'-phosphoribosyl)-anthranilate (PRA). This is Anthranilate phosphoribosyltransferase from Deinococcus geothermalis (strain DSM 11300 / CIP 105573 / AG-3a).